Reading from the N-terminus, the 931-residue chain is 3'-5' exonuclease DinG (931 aa).

Positions 7–162 (VVIDVETTGN…DSDAEVTGLI (156 aa)) constitute an Exonuclease domain. Residues 250–510 (LSELMPGYEK…KKMRQLFQRN (261 aa)) enclose the Helicase ATP-binding domain. 284 to 291 (APPGIGKT) contributes to the ATP binding site. The DEAH box signature appears at 462 to 465 (DEAH). Positions 741-897 (DTARYIELMA…TIIILDRRIK (157 aa)) constitute a Helicase C-terminal domain.

This sequence belongs to the helicase family. DinG subfamily. Type 2 sub-subfamily.

It is found in the cytoplasm. 3'-5' exonuclease. This is 3'-5' exonuclease DinG from Bacillus subtilis (strain 168).